A 544-amino-acid polypeptide reads, in one-letter code: Probable protein kinase UbiB (544 aa).

Residues 123-505 (EFDEQALASA…GRQKSHNVRS (383 aa)) form the Protein kinase domain. Residues 129–137 (LASASIAQV) and Lys156 each bind ATP. The active-site Proton acceptor is Asp291. A helical transmembrane segment spans residues 522–540 (LPLWLSCGTLVTVLLVLLL).

The protein belongs to the ABC1 family. UbiB subfamily.

It is found in the cell inner membrane. Its pathway is cofactor biosynthesis; ubiquinone biosynthesis [regulation]. Is probably a protein kinase regulator of UbiI activity which is involved in aerobic coenzyme Q (ubiquinone) biosynthesis. In Actinobacillus pleuropneumoniae serotype 5b (strain L20), this protein is Probable protein kinase UbiB.